Here is a 221-residue protein sequence, read N- to C-terminus: 7-cyano-7-deazaguanine synthase (221 aa).

ATP is bound at residue L8–I18. Zn(2+)-binding residues include C186, C196, C199, and C202.

This sequence belongs to the QueC family. Zn(2+) serves as cofactor.

The catalysed reaction is 7-carboxy-7-deazaguanine + NH4(+) + ATP = 7-cyano-7-deazaguanine + ADP + phosphate + H2O + H(+). It functions in the pathway purine metabolism; 7-cyano-7-deazaguanine biosynthesis. Functionally, catalyzes the ATP-dependent conversion of 7-carboxy-7-deazaguanine (CDG) to 7-cyano-7-deazaguanine (preQ(0)). This Stenotrophomonas maltophilia (strain R551-3) protein is 7-cyano-7-deazaguanine synthase.